The chain runs to 208 residues: Kinetochore protein Spc25 (208 aa).

The stretch at S31–G101 forms a coiled coil.

This sequence belongs to the SPC25 family. Component of the Ndc80 complex, which is composed of Ndc80, Nuf2 and Spc25.

It is found in the nucleus. It localises to the chromosome. Its subcellular location is the centromere. The protein resides in the kinetochore. Acts as a component of the essential kinetochore-associated Ndc80 complex, which is required for chromosome segregation and spindle checkpoint activity during meiosis and mitosis. Required for kinetochore integrity and the organization of stable microtubule binding sites in the outer plate of the kinetochore. Participates in SAC signaling that responds specifically to disruptions in spindle microtubule dynamics. The NDC80 complex synergistically enhances the affinity of the SKA1 complex for microtubules and may allow the NDC80 complex to track depolymerizing microtubules. This chain is Kinetochore protein Spc25, found in Drosophila mojavensis (Fruit fly).